Consider the following 184-residue polypeptide: ATP synthase subunit b 1 (184 aa).

Residues L4–S24 form a helical membrane-spanning segment.

This sequence belongs to the ATPase B chain family. In terms of assembly, F-type ATPases have 2 components, F(1) - the catalytic core - and F(0) - the membrane proton channel. F(1) has five subunits: alpha(3), beta(3), gamma(1), delta(1), epsilon(1). F(0) has three main subunits: a(1), b(2) and c(10-14). The alpha and beta chains form an alternating ring which encloses part of the gamma chain. F(1) is attached to F(0) by a central stalk formed by the gamma and epsilon chains, while a peripheral stalk is formed by the delta and b chains.

The protein localises to the cell inner membrane. Its function is as follows. F(1)F(0) ATP synthase produces ATP from ADP in the presence of a proton or sodium gradient. F-type ATPases consist of two structural domains, F(1) containing the extramembraneous catalytic core and F(0) containing the membrane proton channel, linked together by a central stalk and a peripheral stalk. During catalysis, ATP synthesis in the catalytic domain of F(1) is coupled via a rotary mechanism of the central stalk subunits to proton translocation. Component of the F(0) channel, it forms part of the peripheral stalk, linking F(1) to F(0). This is ATP synthase subunit b 1 from Cereibacter sphaeroides (strain ATCC 17029 / ATH 2.4.9) (Rhodobacter sphaeroides).